The sequence spans 518 residues: Arrestin-related trafficking adapter 10 (518 aa).

Lys-118 is covalently cross-linked (Glycyl lysine isopeptide (Lys-Gly) (interchain with G-Cter in ubiquitin)).

The protein belongs to the ART10 family. In terms of assembly, interacts with RSP5. In terms of processing, ubiquitinated by RSP5.

The protein resides in the cytoplasm. In terms of biological role, may regulate endocytosis by recruiting RSP5 ubiquitin ligase activity to specific plasma membrane proteins in response to extracellular stimuli. This is Arrestin-related trafficking adapter 10 (ART10) from Saccharomyces cerevisiae (strain ATCC 204508 / S288c) (Baker's yeast).